A 1276-amino-acid chain; its full sequence is Probable ubiquitin carboxyl-terminal hydrolase K02C4.3 (1276 aa).

The USP domain occupies 168 to 762; that stretch reads TGLYNSGNTC…SAYMLMYVRS (595 aa). Cys177 (nucleophile) is an active-site residue. The disordered stretch occupies residues 375–402; sequence SMDTEAATSSNLPGNSVENHPNPAAPEV. Residues 380 to 393 are compositionally biased toward polar residues; it reads AATSSNLPGNSVEN. His707 functions as the Proton acceptor in the catalytic mechanism.

It belongs to the peptidase C19 family.

The catalysed reaction is Thiol-dependent hydrolysis of ester, thioester, amide, peptide and isopeptide bonds formed by the C-terminal Gly of ubiquitin (a 76-residue protein attached to proteins as an intracellular targeting signal).. The protein is Probable ubiquitin carboxyl-terminal hydrolase K02C4.3 of Caenorhabditis elegans.